Reading from the N-terminus, the 83-residue chain is Cytochrome c oxidase subunit 7A2, mitochondrial (83 aa).

A mitochondrion-targeting transit peptide spans 1 to 23 (MLRNVLALRQIAQRTISTTSRRH). Residues 24–48 (FENKVPEKQKLFQEDNGMPVHLKGG) lie on the Mitochondrial matrix side of the membrane. An N6-acetyllysine modification is found at K33. The helical transmembrane segment at 49–77 (TSDALLYRATMLLTVGGTAYAIYMLAMAA) threads the bilayer. Residues 78-83 (FPKKQN) lie on the Mitochondrial intermembrane side of the membrane.

This sequence belongs to the cytochrome c oxidase VIIa family. As to quaternary structure, component of the cytochrome c oxidase (complex IV, CIV), a multisubunit enzyme composed of 14 subunits. The complex is composed of a catalytic core of 3 subunits MT-CO1, MT-CO2 and MT-CO3, encoded in the mitochondrial DNA, and 11 supernumerary subunits COX4I, COX5A, COX5B, COX6A, COX6B, COX6C, COX7A, COX7B, COX7C, COX8 and NDUFA4, which are encoded in the nuclear genome. The complex exists as a monomer or a dimer and forms supercomplexes (SCs) in the inner mitochondrial membrane with NADH-ubiquinone oxidoreductase (complex I, CI) and ubiquinol-cytochrome c oxidoreductase (cytochrome b-c1 complex, complex III, CIII), resulting in different assemblies (supercomplex SCI(1)III(2)IV(1) and megacomplex MCI(2)III(2)IV(2)). Interacts with PET100.

It is found in the mitochondrion inner membrane. Its pathway is energy metabolism; oxidative phosphorylation. Its function is as follows. Component of the cytochrome c oxidase, the last enzyme in the mitochondrial electron transport chain which drives oxidative phosphorylation. The respiratory chain contains 3 multisubunit complexes succinate dehydrogenase (complex II, CII), ubiquinol-cytochrome c oxidoreductase (cytochrome b-c1 complex, complex III, CIII) and cytochrome c oxidase (complex IV, CIV), that cooperate to transfer electrons derived from NADH and succinate to molecular oxygen, creating an electrochemical gradient over the inner membrane that drives transmembrane transport and the ATP synthase. Cytochrome c oxidase is the component of the respiratory chain that catalyzes the reduction of oxygen to water. Electrons originating from reduced cytochrome c in the intermembrane space (IMS) are transferred via the dinuclear copper A center (CU(A)) of subunit 2 and heme A of subunit 1 to the active site in subunit 1, a binuclear center (BNC) formed by heme A3 and copper B (CU(B)). The BNC reduces molecular oxygen to 2 water molecules using 4 electrons from cytochrome c in the IMS and 4 protons from the mitochondrial matrix. In Rattus norvegicus (Rat), this protein is Cytochrome c oxidase subunit 7A2, mitochondrial (Cox7a2).